The following is a 336-amino-acid chain: Dihydroorotate dehydrogenase (quinone) (336 aa).

Residues 62 to 66 and Thr86 contribute to the FMN site; that span reads AGLDK. Lys66 is a binding site for substrate. A substrate-binding site is contributed by 111–115; that stretch reads NRMGF. Residues Asn139 and Asn172 each contribute to the FMN site. Asn172 contacts substrate. Residue Ser175 is the Nucleophile of the active site. Asn177 contacts substrate. FMN is bound by residues Lys217 and Thr245. 246–247 is a substrate binding site; it reads NT. FMN is bound by residues Gly268, Gly297, and 318–319; that span reads YS.

This sequence belongs to the dihydroorotate dehydrogenase family. Type 2 subfamily. Monomer. FMN serves as cofactor.

It localises to the cell membrane. The enzyme catalyses (S)-dihydroorotate + a quinone = orotate + a quinol. Its pathway is pyrimidine metabolism; UMP biosynthesis via de novo pathway; orotate from (S)-dihydroorotate (quinone route): step 1/1. Its function is as follows. Catalyzes the conversion of dihydroorotate to orotate with quinone as electron acceptor. This chain is Dihydroorotate dehydrogenase (quinone), found in Proteus mirabilis (strain HI4320).